Consider the following 86-residue polypeptide: Weak neurotoxin WNTX34 (86 aa).

A signal peptide spans 1–21; sequence MKTLLLTLVVVTIVCLDLGYS. 5 disulfide bridges follow: Cys24–Cys45, Cys27–Cys32, Cys38–Cys63, Cys67–Cys78, and Cys79–Cys84.

It belongs to the three-finger toxin family. Ancestral subfamily. Orphan group II sub-subfamily. Expressed by the venom gland.

The protein localises to the secreted. In terms of biological role, binds with low affinity to muscular (alpha-1-beta-1-delta-epsilon/CHRNA1-CHRNB1-CHRND-CHRNE) and very low affinity to neuronal (alpha-7/CHRNA7) nicotinic acetylcholine receptor (nAChR). The polypeptide is Weak neurotoxin WNTX34 (Ophiophagus hannah (King cobra)).